The primary structure comprises 407 residues: Aminomethyltransferase, mitochondrial (407 aa).

Residues 1–29 constitute a mitochondrion transit peptide; that stretch reads MRGGLWQVGQSITRRLGQSDKKTIVRRWY. Substrate is bound by residues E234, R265, and Y403.

The protein belongs to the GcvT family. The glycine cleavage system is composed of four proteins: P, T, L and H.

The protein resides in the mitochondrion. The catalysed reaction is N(6)-[(R)-S(8)-aminomethyldihydrolipoyl]-L-lysyl-[protein] + (6S)-5,6,7,8-tetrahydrofolate = N(6)-[(R)-dihydrolipoyl]-L-lysyl-[protein] + (6R)-5,10-methylene-5,6,7,8-tetrahydrofolate + NH4(+). Functionally, the glycine cleavage system catalyzes the degradation of glycine. The sequence is that of Aminomethyltransferase, mitochondrial (GDCST) from Flaveria trinervia (Clustered yellowtops).